A 407-amino-acid polypeptide reads, in one-letter code: Phosphopentomutase (407 aa).

D10, D306, H311, D347, H348, and H359 together coordinate Mn(2+).

Belongs to the phosphopentomutase family. Mn(2+) serves as cofactor.

The protein resides in the cytoplasm. It carries out the reaction 2-deoxy-alpha-D-ribose 1-phosphate = 2-deoxy-D-ribose 5-phosphate. The catalysed reaction is alpha-D-ribose 1-phosphate = D-ribose 5-phosphate. Its pathway is carbohydrate degradation; 2-deoxy-D-ribose 1-phosphate degradation; D-glyceraldehyde 3-phosphate and acetaldehyde from 2-deoxy-alpha-D-ribose 1-phosphate: step 1/2. Its function is as follows. Isomerase that catalyzes the conversion of deoxy-ribose 1-phosphate (dRib-1-P) and ribose 1-phosphate (Rib-1-P) to deoxy-ribose 5-phosphate (dRib-5-P) and ribose 5-phosphate (Rib-5-P), respectively. The protein is Phosphopentomutase of Salmonella paratyphi C (strain RKS4594).